Reading from the N-terminus, the 144-residue chain is UPF0102 protein BTH_I3148 (144 aa).

The tract at residues 1-20 (MCHARAARQATGEAEAAPRD) is disordered.

It belongs to the UPF0102 family.

The protein is UPF0102 protein BTH_I3148 of Burkholderia thailandensis (strain ATCC 700388 / DSM 13276 / CCUG 48851 / CIP 106301 / E264).